Here is a 48-residue protein sequence, read N- to C-terminus: MSKRGRGGTSGAKFRISLGLPVGAVMNCADNTGAKNLFVIAVYGIKGR.

The protein belongs to the universal ribosomal protein uL14 family.

The protein is Large ribosomal subunit protein uL14 (RPL23) of Onchocerca volvulus.